We begin with the raw amino-acid sequence, 863 residues long: MATTGTPTADRGDAAATDDPAARFQVQKHSWDGLRSIIHGSRKYSGLIVNKAPHDFQFVQKTDESGPHSHRLYYLGMPYGSRENSLLYSEIPKKVRKEALLLLSWKQMLDHFQATPHHGVYSREEELLRERKRLGVFGITSYDFHSESGLFLFQASNSLFHCRDGGKNGFMVSPMKPLEIKTQCSGPRMDPKICPADPAFFSFINNSDLWVANIETGEERRLTFCHQGLSNVLDDPKSAGVATFVIQEEFDRFTGYWWCPTASWEGSEGLKTLRILYEEVDESEVEVIHVPSPALEERKTDSYRYPRTGSKNPKIALKLAEFQTDSQGKIVSTQEKELVQPFSSLFPKVEYIARAGWTRDGKYAWAMFLDRPQQWLQLVLLPPALFIPSTENEEQRLASARAVPRNVQPYVVYEEVTNVWINVHDIFYPFPQSEGEDELCFLRANECKTGFCHLYKVTAVLKSQGYDWSEPFSPGEDEFKCPIKEEIALTSGEWEVLARHGSKIWVNEETKLVYFQGTKDTPLEHHLYVVSYEAAGEIVRLTTPGFSHSCSMSQNFDMFVSHYSSVSTPPCVHVYKLSGPDDDPLHKQPRFWASMMEAASCPPDYVPPEIFHFHTRSDVRLYGMIYKPHALQPGKKHPTVLFVYGGPQVQLVNNSFKGIKYLRLNTLASLGYAVVVIDGRGSCQRGLRFEGALKNQMGQVEIEDQVEGLQFVAEKYGFIDLSRVAIHGWSYGGFLSLMGLIHKPQVFKVAIAGAPVTVWMAYDTGYTERYMDVPENNQHGYEAGSVALHVEKLPNEPNRLLILHGFLDENVHFFHTNFLVSQLIRAGKPYQLQIYPNERHSIRCPESGEHYEVTLLHFLQEYL.

The tract at residues 1–20 (MATTGTPTADRGDAAATDDP) is disordered. Ala-2 is modified (N-acetylalanine). Active-site charge relay system residues include Ser-730, Asp-808, and His-840. Ser-730 contributes to the Val-boroPro binding site.

Belongs to the peptidase S9B family. DPPIV subfamily. Homodimer. Forms a ternary complex with NLRP1, composed of a DPP9 homodimer, one full-length NLRP1 protein, and one cleaved C-terminus of NLRP1 (NACHT, LRR and PYD domains-containing protein 1, C-terminus). Forms a ternary complex with CARD8, composed of a DPP9 homodimer, one full-length NLRP1 protein, and one cleaved C-terminus of CARD8 (Caspase recruitment domain-containing protein 8, C-terminus). In the ternary complex, only one subunit of the DPP9 homodimer is bound to NLRP1 or CARD8. In terms of tissue distribution, ubiquitously expressed, with highest levels in liver, heart and muscle, and lowest levels in brain.

The protein localises to the cytoplasm. The protein resides in the cytosol. Its subcellular location is the nucleus. It carries out the reaction Release of an N-terminal dipeptide, Xaa-Yaa-|-Zaa-, from a polypeptide, preferentially when Yaa is Pro, provided Zaa is neither Pro nor hydroxyproline.. With respect to regulation, inhibited by the serine proteinase inhibitor 4-(2-aminoethyl)benzenesulphonyl fluoride (AEBSF), and by di-isopropylfluorophosphate. Inhibited by Val-boroPro (Talabostat, PT-100), a non-selective inhibitor, which triggers pyroptosis in monocytes and macrophages. Val-boroPro inhibits activity by binding to the active site, mimicking a substrate-bound state, thereby displacing the C-terminal fragment of NLRP1, leading to activation of the NLRP1 inflammasome. In contrast, Val-boroPro does not directly displaces CARD8: it acts by promoting degradation of the N-terminal part of CARD8, leading to indirect disruption of the ternary complex. Chemical inhibition of DPP9 by Val-boroPro in HIV-1-infected cells activates the CARD8 inflammasome, triggering cell death, offering a promising strategy for the elimination of HIV-1 reservoirs in people living with HIV-1. In terms of biological role, dipeptidyl peptidase that cleaves off N-terminal dipeptides from proteins having a Pro or Ala residue at position 2. Acts as a key inhibitor of caspase-1-dependent monocyte and macrophage pyroptosis in resting cells by preventing activation of NLRP1 and CARD8. Sequesters the cleaved C-terminal part of NLRP1 and CARD8, which respectively constitute the active part of the NLRP1 and CARD8 inflammasomes, in a ternary complex, thereby preventing their oligomerization and activation. The dipeptidyl peptidase activity is required to suppress NLRP1 and CARD8; however, neither NLRP1 nor CARD8 are bona fide substrates of DPP9, suggesting the existence of substrate(s) required for NLRP1 and CARD8 inhibition. The protein is Dipeptidyl peptidase 9 of Homo sapiens (Human).